Here is a 314-residue protein sequence, read N- to C-terminus: Elongation factor Ts (314 aa).

Residues 82–85 (TDFV) form an involved in Mg(2+) ion dislocation from EF-Tu region.

The protein belongs to the EF-Ts family.

It is found in the cytoplasm. Associates with the EF-Tu.GDP complex and induces the exchange of GDP to GTP. It remains bound to the aminoacyl-tRNA.EF-Tu.GTP complex up to the GTP hydrolysis stage on the ribosome. The chain is Elongation factor Ts from Nostoc punctiforme (strain ATCC 29133 / PCC 73102).